The sequence spans 362 residues: Myricetin 3'/5'-O-methyltransferase 1 (362 aa).

Aspartate 229 contacts S-adenosyl-L-methionine. The Proton acceptor role is filled by histidine 267.

It belongs to the class I-like SAM-binding methyltransferase superfamily. Cation-independent O-methyltransferase family. In terms of assembly, homodimer. In terms of tissue distribution, mainly expressed in leaves secreting glandular trichomes types 1 and 4 and, to a lesser extent, in storage trichomes type 6.

The catalysed reaction is myricetin + S-adenosyl-L-methionine = laricitrin + S-adenosyl-L-homocysteine + H(+). The enzyme catalyses laricitrin + S-adenosyl-L-methionine = syringetin + S-adenosyl-L-homocysteine + H(+). It catalyses the reaction a 3'-hydroxyflavone + S-adenosyl-L-methionine = a 3'-methoxyflavone + S-adenosyl-L-homocysteine + H(+). It carries out the reaction a 5'-hydroxy-3'-methoxyflavone + S-adenosyl-L-methionine = a 3',5'-dimethoxyflavone + S-adenosyl-L-homocysteine + H(+). The catalysed reaction is quercetin + S-adenosyl-L-methionine = isorhamnetin + S-adenosyl-L-homocysteine + H(+). The enzyme catalyses rhamnetin + S-adenosyl-L-methionine = rhamnacene + S-adenosyl-L-homocysteine + H(+). It catalyses the reaction 3',4',5,7-tetrahydroxy-3-methoxyflavone + S-adenosyl-L-methionine = 3,3'-O-dimethylquercetin + S-adenosyl-L-homocysteine + H(+). It functions in the pathway flavonoid metabolism. In terms of biological role, flavonoid 3'/5'-O-methyltransferase involved in the biosynthesis of polymethoxylated flavonoids natural products such as myricetin derivatives, aroma compounds possessing antioxidant properties and exhibiting pharmacological activities such as anti-carcinogen, anti-viral, anti-thrombotic, anti-diabetic, anti-atherosclerotic, and anti-inflammatory effects. Catalyzes S-adenosylmethionine-dependent regioselective 3'/5'-O-methylation of flavonoids; active on various hydroxylated flavonoid substrates, including myricetin and quercetin, but inactive toward kaempferol. Mediates the formation of 3'-methyl derivatives from quercetin, myricetin, 3-methyl quercetin and 7-methyl quercetin (rhamnetin), producing 3'-methyl quercetin (isorhamnetin), 3'-methyl myricetin (laricitrin), 3,3'-dimethyl quercetin (3-O-methylisorhamnetin) and 7,3'-dimethyl quercetin (7-O-methylisorhamnetin), respectively. Triggers the 5'-O-methylation of 3'-methyl myricetin (laricitrin), thus leading to production of 3',5'-dimethyl myricetin (syringetin). This is Myricetin 3'/5'-O-methyltransferase 1 from Solanum habrochaites (Wild tomato).